Reading from the N-terminus, the 651-residue chain is Acetyl-coenzyme A synthetase (651 aa).

CoA-binding positions include 190–193 (RRGK) and T311. Residues 387 to 389 (GEP), 411 to 416 (DTWWQT), D508, and R523 each bind ATP. S531 contributes to the CoA binding site. Position 534 (R534) interacts with ATP. Mg(2+)-binding residues include V545, H547, and V550. At K617 the chain carries N6-acetyllysine.

Belongs to the ATP-dependent AMP-binding enzyme family. Mg(2+) serves as cofactor. Post-translationally, acetylated. Deacetylation by the SIR2-homolog deacetylase activates the enzyme.

It catalyses the reaction acetate + ATP + CoA = acetyl-CoA + AMP + diphosphate. Its function is as follows. Catalyzes the conversion of acetate into acetyl-CoA (AcCoA), an essential intermediate at the junction of anabolic and catabolic pathways. AcsA undergoes a two-step reaction. In the first half reaction, AcsA combines acetate with ATP to form acetyl-adenylate (AcAMP) intermediate. In the second half reaction, it can then transfer the acetyl group from AcAMP to the sulfhydryl group of CoA, forming the product AcCoA. This chain is Acetyl-coenzyme A synthetase, found in Mycobacterium bovis (strain ATCC BAA-935 / AF2122/97).